Here is a 73-residue protein sequence, read N- to C-terminus: Translation initiation factor IF-1 (73 aa).

An S1-like domain is found at 1–73 (MANKEELIEF…SKGRITYRAR (73 aa)).

Belongs to the IF-1 family. In terms of assembly, component of the 30S ribosomal translation pre-initiation complex which assembles on the 30S ribosome in the order IF-2 and IF-3, IF-1 and N-formylmethionyl-tRNA(fMet); mRNA recruitment can occur at any time during PIC assembly.

It localises to the cytoplasm. Functionally, one of the essential components for the initiation of protein synthesis. Stabilizes the binding of IF-2 and IF-3 on the 30S subunit to which N-formylmethionyl-tRNA(fMet) subsequently binds. Helps modulate mRNA selection, yielding the 30S pre-initiation complex (PIC). Upon addition of the 50S ribosomal subunit IF-1, IF-2 and IF-3 are released leaving the mature 70S translation initiation complex. The protein is Translation initiation factor IF-1 of Acinetobacter baylyi (strain ATCC 33305 / BD413 / ADP1).